A 628-amino-acid polypeptide reads, in one-letter code: Vacuolar-sorting receptor 4 (628 aa).

An N-terminal signal peptide occupies residues 1–24 (MKQLLCYLPWLLLLSLVVSPFNEA). The Lumenal segment spans residues 25–569 (RFVVEKNSLS…SKTGSQVKSA (545 aa)). One can recognise a PA domain in the interval 56–168 (QYGGSMAGTV…GFGEKLKKAI (113 aa)). Residues Asn148, Asn294, and Asn434 are each glycosylated (N-linked (GlcNAc...) asparagine). EGF-like domains are found at residues 416–466 (ETNE…SHCE) and 469–516 (GPGR…KKCE). Disulfide bonds link Cys420-Cys438, Cys427-Cys447, Cys449-Cys465, Cys473-Cys493, Cys480-Cys501, Cys503-Cys515, and Cys545-Cys558. The EGF-like 3; calcium-binding domain maps to 517–559 (DINECKEKKACQCPECSCKNTWGSYECSCSGDLLYMRDHDTCI). A helical membrane pass occupies residues 570 to 590 (WAAVWLIMLSLGLAAAGAYLV). Topologically, residues 591 to 628 (YKYRLRQYMDSEIRAIMAQYMPLDSQPEVPNHTNDERA) are cytoplasmic. The Tyrosine-based internalization motif motif lies at 610–613 (YMPL).

This sequence belongs to the VSR (BP-80) family. As to expression, expressed at low levels in seeds, seedlings, roots, stems, leaves, flowers and siliques.

It is found in the membrane. The protein resides in the golgi apparatus membrane. The protein localises to the cytoplasmic vesicle. It localises to the clathrin-coated vesicle membrane. Its subcellular location is the prevacuolar compartment membrane. Vacuolar-sorting receptor (VSR) involved in clathrin-coated vesicles sorting from Golgi apparatus to vacuoles. This chain is Vacuolar-sorting receptor 4 (VSR4), found in Arabidopsis thaliana (Mouse-ear cress).